The sequence spans 205 residues: ATP phosphoribosyltransferase (205 aa).

It belongs to the ATP phosphoribosyltransferase family. Short subfamily.

It localises to the cytoplasm. The enzyme catalyses 1-(5-phospho-beta-D-ribosyl)-ATP + diphosphate = 5-phospho-alpha-D-ribose 1-diphosphate + ATP. Its pathway is amino-acid biosynthesis; L-histidine biosynthesis; L-histidine from 5-phospho-alpha-D-ribose 1-diphosphate: step 1/9. Functionally, catalyzes the condensation of ATP and 5-phosphoribose 1-diphosphate to form N'-(5'-phosphoribosyl)-ATP (PR-ATP). Has a crucial role in the pathway because the rate of histidine biosynthesis seems to be controlled primarily by regulation of HisG enzymatic activity. This is ATP phosphoribosyltransferase from Thermococcus gammatolerans (strain DSM 15229 / JCM 11827 / EJ3).